A 20-amino-acid polypeptide reads, in one-letter code: LAKRADICQPGKTSQRACET.

The interval 1-20 is disordered; it reads LAKRADICQPGKTSQRACET. The segment covering 11 to 20 has biased composition (polar residues); the sequence is GKTSQRACET.

Contains 4 disulfide bonds. Expressed by the venom gland.

It is found in the secreted. Has a vascular smooth muscle contracting activity. Causes short-lived contractions of both arterial and venous rabbit vessels. The polypeptide is U27-ctenitoxin-Pn1a (Phoneutria nigriventer (Brazilian armed spider)).